Consider the following 203-residue polypeptide: Small ribosomal subunit protein uS4 (203 aa).

Residues 93–156 (RRLDNVVYRL…MKVPAILEAV (64 aa)) form the S4 RNA-binding domain.

It belongs to the universal ribosomal protein uS4 family. As to quaternary structure, part of the 30S ribosomal subunit. Contacts protein S5. The interaction surface between S4 and S5 is involved in control of translational fidelity.

Its function is as follows. One of the primary rRNA binding proteins, it binds directly to 16S rRNA where it nucleates assembly of the body of the 30S subunit. In terms of biological role, with S5 and S12 plays an important role in translational accuracy. In Streptococcus pyogenes serotype M1, this protein is Small ribosomal subunit protein uS4.